The following is a 216-amino-acid chain: Minor capsid protein (216 aa).

The protein resides in the virion. Its function is as follows. Component that constitutes the tail found at one end of the virion. Together with Hsp70h and p64, encapsidates the 5'-terminal portion of the viral genome. Movement protein that is involved in local cell-cell movement via plamodesmata. At least five viral proteins, CP, CPm, p6, p64 and Hsp70h are essential for cell-cell movement. This chain is Minor capsid protein, found in Beet yellows virus (isolate Ukraine) (BYV).